The chain runs to 262 residues: Phosphatidylglycerol--prolipoprotein diacylglyceryl transferase 1 (262 aa).

4 helical membrane passes run 15-35, 40-60, 83-103, and 108-128; these read WYGI…SINA, LNFD…IIGA, QGGL…FIYC, and VDFL…QGIG. Position 129 (R129) interacts with a 1,2-diacyl-sn-glycero-3-phospho-(1'-sn-glycerol). Transmembrane regions (helical) follow at residues 169-189, 197-217, and 229-249; these read TFLY…IILY, GVVI…IEGL, and VAQL…IIIV.

This sequence belongs to the Lgt family.

It localises to the cell membrane. It catalyses the reaction L-cysteinyl-[prolipoprotein] + a 1,2-diacyl-sn-glycero-3-phospho-(1'-sn-glycerol) = an S-1,2-diacyl-sn-glyceryl-L-cysteinyl-[prolipoprotein] + sn-glycerol 1-phosphate + H(+). Its pathway is protein modification; lipoprotein biosynthesis (diacylglyceryl transfer). Its function is as follows. Catalyzes the transfer of the diacylglyceryl group from phosphatidylglycerol to the sulfhydryl group of the N-terminal cysteine of a prolipoprotein, the first step in the formation of mature lipoproteins. This Clostridium perfringens (strain 13 / Type A) protein is Phosphatidylglycerol--prolipoprotein diacylglyceryl transferase 1.